Reading from the N-terminus, the 515-residue chain is GMP synthase [glutamine-hydrolyzing] (515 aa).

One can recognise a Glutamine amidotransferase type-1 domain in the interval Lys6–Asp198. Cys83 functions as the Nucleophile in the catalytic mechanism. Active-site residues include His172 and Glu174. In terms of domain architecture, GMPS ATP-PPase spans Trp199–Arg390. An ATP-binding site is contributed by Ser226 to Thr232.

In terms of assembly, homodimer.

The catalysed reaction is XMP + L-glutamine + ATP + H2O = GMP + L-glutamate + AMP + diphosphate + 2 H(+). It functions in the pathway purine metabolism; GMP biosynthesis; GMP from XMP (L-Gln route): step 1/1. Functionally, catalyzes the synthesis of GMP from XMP. This chain is GMP synthase [glutamine-hydrolyzing], found in Maridesulfovibrio salexigens (strain ATCC 14822 / DSM 2638 / NCIMB 8403 / VKM B-1763) (Desulfovibrio salexigens).